The chain runs to 230 residues: Probable nicotinate-nucleotide adenylyltransferase (230 aa).

Belongs to the NadD family.

The enzyme catalyses nicotinate beta-D-ribonucleotide + ATP + H(+) = deamido-NAD(+) + diphosphate. It functions in the pathway cofactor biosynthesis; NAD(+) biosynthesis; deamido-NAD(+) from nicotinate D-ribonucleotide: step 1/1. Its function is as follows. Catalyzes the reversible adenylation of nicotinate mononucleotide (NaMN) to nicotinic acid adenine dinucleotide (NaAD). The sequence is that of Probable nicotinate-nucleotide adenylyltransferase from Pseudomonas putida (strain ATCC 47054 / DSM 6125 / CFBP 8728 / NCIMB 11950 / KT2440).